Consider the following 399-residue polypeptide: Bone morphogenetic protein 8B (399 aa).

The signal sequence occupies residues 1–19; it reads MAARPGLLWLLGLALCVLG. Residues 20 to 260 constitute a propeptide that is removed on maturation; it reads GGHLSHPPHV…ANQSPVRAPR (241 aa). Residues Asn155 and Asn340 are each glycosylated (N-linked (GlcNAc...) asparagine). Intrachain disulfides connect Cys298–Cys364, Cys327–Cys396, and Cys331–Cys398.

This sequence belongs to the TGF-beta family. In terms of assembly, homodimer; disulfide-linked. As to expression, expressed in testis. Expressed in decidual cells of the uterus and in trophoblast cells of the labyrinthine region of the placenta and in the inner root sheath of hair follicles of early postnatal skin. Expressed in the extraembryonic ectoderm in pregastrula and gastrula stage mouse embryos. Expressed in brown adipose tissue and brain.

It localises to the secreted. Induces cartilage and bone formation. May be the osteoinductive factor responsible for the phenomenon of epithelial osteogenesis. Plays a role in calcium regulation and bone homeostasis. Involved in the generation of primordial germ cells; this function involves Bmp4 in a synergistic manner though separate receptor complexes seem to be involved. Required for the initiation and maintenance of spermatogenesis. Signaling protein involved in regulation of thermogenesis and energy balance. Proposed to increase the peripheral response of brown adipose tissue (BAT) to adrenergic stimulation while acting centrally in the hypothalamus to increase sympathetic output to BAT. In Mus musculus (Mouse), this protein is Bone morphogenetic protein 8B (Bmp8b).